Reading from the N-terminus, the 252-residue chain is 3-deoxy-manno-octulosonate cytidylyltransferase (252 aa).

Belongs to the KdsB family.

It is found in the cytoplasm. The enzyme catalyses 3-deoxy-alpha-D-manno-oct-2-ulosonate + CTP = CMP-3-deoxy-beta-D-manno-octulosonate + diphosphate. The protein operates within nucleotide-sugar biosynthesis; CMP-3-deoxy-D-manno-octulosonate biosynthesis; CMP-3-deoxy-D-manno-octulosonate from 3-deoxy-D-manno-octulosonate and CTP: step 1/1. It participates in bacterial outer membrane biogenesis; lipopolysaccharide biosynthesis. Functionally, activates KDO (a required 8-carbon sugar) for incorporation into bacterial lipopolysaccharide in Gram-negative bacteria. The protein is 3-deoxy-manno-octulosonate cytidylyltransferase of Thiobacillus denitrificans (strain ATCC 25259 / T1).